The following is a 122-amino-acid chain: Small ribosomal subunit protein uS13 (122 aa).

The segment at 98–122 (VRGQRTHTNARTRKGPAKAIAGKKK) is disordered.

The protein belongs to the universal ribosomal protein uS13 family. Part of the 30S ribosomal subunit. Forms a loose heterodimer with protein S19. Forms two bridges to the 50S subunit in the 70S ribosome.

Located at the top of the head of the 30S subunit, it contacts several helices of the 16S rRNA. In the 70S ribosome it contacts the 23S rRNA (bridge B1a) and protein L5 of the 50S subunit (bridge B1b), connecting the 2 subunits; these bridges are implicated in subunit movement. Contacts the tRNAs in the A and P-sites. In Jannaschia sp. (strain CCS1), this protein is Small ribosomal subunit protein uS13.